The following is a 179-amino-acid chain: Interleukin-10 (179 aa).

The signal sequence occupies residues 1-19 (MPSSSALLCCLVFLAGVAA). Disulfide bonds link Cys31–Cys127 and Cys81–Cys133. A glycan (N-linked (GlcNAc...) asparagine) is linked at Asn135.

Belongs to the IL-10 family. In terms of assembly, homodimer. Interacts with IL10RA and IL10RB.

The protein localises to the secreted. Its function is as follows. Major immune regulatory cytokine that acts on many cells of the immune system where it has profound anti-inflammatory functions, limiting excessive tissue disruption caused by inflammation. Mechanistically, IL10 binds to its heterotetrameric receptor comprising IL10RA and IL10RB leading to JAK1 and STAT2-mediated phosphorylation of STAT3. In turn, STAT3 translocates to the nucleus where it drives expression of anti-inflammatory mediators. Targets antigen-presenting cells (APCs) such as macrophages and monocytes and inhibits their release of pro-inflammatory cytokines including granulocyte-macrophage colony-stimulating factor /GM-CSF, granulocyte colony-stimulating factor/G-CSF, IL-1 alpha, IL-1 beta, IL-6, IL-8 and TNF-alpha. Also interferes with antigen presentation by reducing the expression of MHC-class II and co-stimulatory molecules, thereby inhibiting their ability to induce T cell activation. In addition, controls the inflammatory response of macrophages by reprogramming essential metabolic pathways including mTOR signaling. In Bubalus carabanensis (Swamp type water buffalo), this protein is Interleukin-10 (IL10).